Consider the following 134-residue polypeptide: ATP synthase epsilon chain (134 aa).

The protein belongs to the ATPase epsilon chain family. F-type ATPases have 2 components, CF(1) - the catalytic core - and CF(0) - the membrane proton channel. CF(1) has five subunits: alpha(3), beta(3), gamma(1), delta(1), epsilon(1). CF(0) has three main subunits: a, b and c.

It localises to the cell membrane. Functionally, produces ATP from ADP in the presence of a proton gradient across the membrane. The protein is ATP synthase epsilon chain of Anoxybacillus flavithermus (strain DSM 21510 / WK1).